Consider the following 228-residue polypeptide: Triosephosphate isomerase (228 aa).

9–11 provides a ligand contact to substrate; sequence NFK. The Electrophile role is filled by histidine 93. The active-site Proton acceptor is the glutamate 141. Residues isoleucine 146, glycine 181, and 202 to 203 each bind substrate; that span reads AS.

It belongs to the triosephosphate isomerase family. Homotetramer; dimer of dimers.

Its subcellular location is the cytoplasm. It carries out the reaction D-glyceraldehyde 3-phosphate = dihydroxyacetone phosphate. The protein operates within carbohydrate biosynthesis; gluconeogenesis. Its pathway is carbohydrate degradation; glycolysis; D-glyceraldehyde 3-phosphate from glycerone phosphate: step 1/1. Functionally, involved in the gluconeogenesis. Catalyzes stereospecifically the conversion of dihydroxyacetone phosphate (DHAP) to D-glyceraldehyde-3-phosphate (G3P). The protein is Triosephosphate isomerase of Pyrobaculum calidifontis (strain DSM 21063 / JCM 11548 / VA1).